The following is a 657-amino-acid chain: Transketolase (657 aa).

Substrate is bound at residue His31. Thiamine diphosphate contacts are provided by residues His71 and 120–122 (GPL). A Mg(2+)-binding site is contributed by Asp158. 2 residues coordinate thiamine diphosphate: Gly159 and Asn188. Residues Asn188 and Ile190 each coordinate Mg(2+). Substrate is bound by residues His262, Arg354, and Ser381. His262 contacts thiamine diphosphate. Glu408 acts as the Proton donor in catalysis. Residue Phe434 coordinates thiamine diphosphate. Substrate is bound by residues His458, Asp466, and Arg517.

It belongs to the transketolase family. In terms of assembly, homodimer. Mg(2+) is required as a cofactor. It depends on Ca(2+) as a cofactor. Requires Mn(2+) as cofactor. Co(2+) serves as cofactor. The cofactor is thiamine diphosphate.

It catalyses the reaction D-sedoheptulose 7-phosphate + D-glyceraldehyde 3-phosphate = aldehydo-D-ribose 5-phosphate + D-xylulose 5-phosphate. It participates in carbohydrate biosynthesis; Calvin cycle. It functions in the pathway carbohydrate degradation; pentose phosphate pathway. Its function is as follows. Catalyzes the transfer of a two-carbon ketol group from a ketose donor to an aldose acceptor, via a covalent intermediate with the cofactor thiamine pyrophosphate. The polypeptide is Transketolase (tklB) (Cereibacter sphaeroides (Rhodobacter sphaeroides)).